We begin with the raw amino-acid sequence, 301 residues long: Diaminopimelate epimerase (301 aa).

Asparagine 15, glutamine 47, and asparagine 67 together coordinate substrate. Catalysis depends on cysteine 76, which acts as the Proton donor. Substrate-binding positions include 77–78 (GN), asparagine 163, asparagine 197, and 215–216 (ER). The active-site Proton acceptor is cysteine 224. Substrate is bound at residue 225–226 (GS).

It belongs to the diaminopimelate epimerase family. As to quaternary structure, homodimer.

It is found in the cytoplasm. The enzyme catalyses (2S,6S)-2,6-diaminopimelate = meso-2,6-diaminopimelate. It participates in amino-acid biosynthesis; L-lysine biosynthesis via DAP pathway; DL-2,6-diaminopimelate from LL-2,6-diaminopimelate: step 1/1. Its function is as follows. Catalyzes the stereoinversion of LL-2,6-diaminopimelate (L,L-DAP) to meso-diaminopimelate (meso-DAP), a precursor of L-lysine and an essential component of the bacterial peptidoglycan. This chain is Diaminopimelate epimerase, found in Rhizobium etli (strain ATCC 51251 / DSM 11541 / JCM 21823 / NBRC 15573 / CFN 42).